The chain runs to 538 residues: CTP synthase (538 aa).

An amidoligase domain region spans residues Met-1 to Leu-267. Ser-15 is a CTP binding site. Ser-15 contacts UTP. ATP is bound by residues Ser-16–Ile-21 and Asp-73. Residues Asp-73 and Glu-141 each contribute to the Mg(2+) site. CTP contacts are provided by residues Asp-148–Glu-150, Lys-188–Gln-193, and Lys-224. Residues Lys-188–Gln-193 and Lys-224 each bind UTP. In terms of domain architecture, Glutamine amidotransferase type-1 spans Lys-292–Ser-538. Gly-351 is an L-glutamine binding site. The active-site Nucleophile; for glutamine hydrolysis is the Cys-378. Residues Leu-379–Gln-382, Glu-402, and Arg-469 each bind L-glutamine. Residues His-513 and Glu-515 contribute to the active site.

This sequence belongs to the CTP synthase family. Homotetramer.

The catalysed reaction is UTP + L-glutamine + ATP + H2O = CTP + L-glutamate + ADP + phosphate + 2 H(+). The enzyme catalyses L-glutamine + H2O = L-glutamate + NH4(+). It carries out the reaction UTP + NH4(+) + ATP = CTP + ADP + phosphate + 2 H(+). The protein operates within pyrimidine metabolism; CTP biosynthesis via de novo pathway; CTP from UDP: step 2/2. Allosterically activated by GTP, when glutamine is the substrate; GTP has no effect on the reaction when ammonia is the substrate. The allosteric effector GTP functions by stabilizing the protein conformation that binds the tetrahedral intermediate(s) formed during glutamine hydrolysis. Inhibited by the product CTP, via allosteric rather than competitive inhibition. Catalyzes the ATP-dependent amination of UTP to CTP with either L-glutamine or ammonia as the source of nitrogen. Regulates intracellular CTP levels through interactions with the four ribonucleotide triphosphates. The polypeptide is CTP synthase (Helicobacter pylori (strain ATCC 700392 / 26695) (Campylobacter pylori)).